The primary structure comprises 62 residues: MDPQDCKCETGASCSCGTTCSCSNCKCTSCKKSCCSCCPAECSKCSQGCHCEKGSKKCSCCN.

Met1 carries the post-translational modification N-acetylmethionine. The tract at residues Met1–Cys30 is beta. A divalent metal cation contacts are provided by Cys6, Cys8, Cys14, Cys16, Cys20, Cys22, Cys25, Cys27, Cys30, Cys34, Cys35, Cys37, Cys38, Cys42, Cys45, Cys49, Cys51, Cys58, Cys60, and Cys61. Residues Lys31–Asn62 are alpha.

Belongs to the metallothionein superfamily. Type 1 family.

Functionally, metallothioneins have a high content of cysteine residues that bind various heavy metals. This Xenopus laevis (African clawed frog) protein is Metallothionein (mt-a).